A 305-amino-acid polypeptide reads, in one-letter code: Methionyl-tRNA formyltransferase (305 aa).

111–114 (SLLP) is a binding site for (6S)-5,6,7,8-tetrahydrofolate.

This sequence belongs to the Fmt family.

The enzyme catalyses L-methionyl-tRNA(fMet) + (6R)-10-formyltetrahydrofolate = N-formyl-L-methionyl-tRNA(fMet) + (6S)-5,6,7,8-tetrahydrofolate + H(+). Functionally, attaches a formyl group to the free amino group of methionyl-tRNA(fMet). The formyl group appears to play a dual role in the initiator identity of N-formylmethionyl-tRNA by promoting its recognition by IF2 and preventing the misappropriation of this tRNA by the elongation apparatus. The chain is Methionyl-tRNA formyltransferase from Helicobacter acinonychis (strain Sheeba).